The sequence spans 135 residues: Ribosome-binding factor A (135 aa).

This sequence belongs to the RbfA family. As to quaternary structure, monomer. Binds 30S ribosomal subunits, but not 50S ribosomal subunits or 70S ribosomes.

Its subcellular location is the cytoplasm. Functionally, one of several proteins that assist in the late maturation steps of the functional core of the 30S ribosomal subunit. Associates with free 30S ribosomal subunits (but not with 30S subunits that are part of 70S ribosomes or polysomes). Required for efficient processing of 16S rRNA. May interact with the 5'-terminal helix region of 16S rRNA. The protein is Ribosome-binding factor A of Hyphomonas neptunium (strain ATCC 15444).